Consider the following 354-residue polypeptide: Uroporphyrinogen decarboxylase (354 aa).

Substrate-binding positions include 27 to 31 (RQAGR), D77, Y154, T209, and H327.

This sequence belongs to the uroporphyrinogen decarboxylase family. In terms of assembly, homodimer.

The protein resides in the cytoplasm. The catalysed reaction is uroporphyrinogen III + 4 H(+) = coproporphyrinogen III + 4 CO2. It participates in porphyrin-containing compound metabolism; protoporphyrin-IX biosynthesis; coproporphyrinogen-III from 5-aminolevulinate: step 4/4. In terms of biological role, catalyzes the decarboxylation of four acetate groups of uroporphyrinogen-III to yield coproporphyrinogen-III. The polypeptide is Uroporphyrinogen decarboxylase (Shigella dysenteriae serotype 1 (strain Sd197)).